The following is a 264-amino-acid chain: MIGRLLRGGFMTAIYAYLYIPIIILIVNSFNSSRFGINWQGFTTKWYSLLMNNDSLLQAAQHSLTMAVFSATFATLIGSLTAVALYRYRFRGKPFVSGMLFVVMMSPDIVMAISLLVLFMLLGIQLGFWSLLFSHITFCLPFVVVTVYSRLKGFDVRMLEAAKDLGASEFTILRKIILPLAMPAVAAGWVLSFTLSMDDVVVSSFVTGPSYEILPLKIYSMVKVGVSPEVNALATILLVLSLVMVIASQLIARDKTKGNGGDVK.

The next 6 membrane-spanning stretches (helical) occupy residues 10 to 30 (FMTA…VNSF), 66 to 86 (MAVF…VALY), 109 to 129 (IVMA…LGFW), 131 to 151 (LLFS…YSRL), 176 to 196 (IILP…FTLS), and 232 to 252 (ALAT…QLIA). The region spanning 60–248 (AQHSLTMAVF…VLSLVMVIAS (189 aa)) is the ABC transmembrane type-1 domain.

This sequence belongs to the binding-protein-dependent transport system permease family. CysTW subfamily.

The protein localises to the cell inner membrane. Its function is as follows. Required for the activity of the bacterial periplasmic transport system of putrescine and spermidine. This Shigella flexneri protein is Spermidine/putrescine transport system permease protein PotC (potC).